The sequence spans 1318 residues: Maestro heat-like repeat family member 5 (1318 aa).

Residues 1-38 (MDRQCSERPYSCTPTGRVSSAVSQNSRISPPVSTSMKD) form a disordered region. Over residues 12 to 38 (CTPTGRVSSAVSQNSRISPPVSTSMKD) the composition is skewed to polar residues. An HEAT 1 repeat occupies 581–618 (DELHFLLSHLYIWLASEKAHERQRAVHSCMILLKFLNH). The disordered stretch occupies residues 676-695 (ESQAPKELSQAHSDGAPLWN). 8 HEAT repeats span residues 769–811 (GAKL…SHTC), 840–880 (PTSH…LLAA), 996–1033 (RQIP…SPVL), 1037–1074 (LPKQ…HPDK), 1076–1113 (SLLQ…RLGA), 1118–1155 (SQSL…AMAD), 1164–1200 (QVHQ…LLRW), and 1278–1315 (VDTN…VSAR).

This chain is Maestro heat-like repeat family member 5 (MROH5), found in Homo sapiens (Human).